The primary structure comprises 274 residues: Thiamine kinase (274 aa).

Belongs to the thiamine kinase family.

The catalysed reaction is thiamine + ATP = thiamine phosphate + ADP + H(+). It functions in the pathway cofactor biosynthesis; thiamine diphosphate biosynthesis; thiamine phosphate from thiamine: step 1/1. Catalyzes the ATP-dependent phosphorylation of thiamine to thiamine phosphate. Is involved in thiamine salvage. The chain is Thiamine kinase from Escherichia coli O17:K52:H18 (strain UMN026 / ExPEC).